Reading from the N-terminus, the 465-residue chain is 5'-adenylylsulfate reductase 1, chloroplastic (465 aa).

Residues 1-53 (MAMSVNVSSSSSSGIINSRFGVSLEPKVSQIGSLRLLDRVHVAPVSLNLSGKR) constitute a chloroplast transit peptide. The segment at 73-327 (LAATMVAEIA…KAKECGLHKG (255 aa)) is reductase domain. Residues 344–465 (SAVADIFKSE…SLTSFLNLVR (122 aa)) form the Thioredoxin domain. Residues cysteine 385 and cysteine 388 each act as nucleophile in the active site. Cysteine 385 and cysteine 388 are joined by a disulfide.

This sequence belongs to the APS reductase family. [4Fe-4S] cluster is required as a cofactor. Leaves, roots and stem.

It is found in the plastid. Its subcellular location is the chloroplast. The catalysed reaction is glutathione disulfide + sulfite + AMP + 2 H(+) = adenosine 5'-phosphosulfate + 2 glutathione. With respect to regulation, stimulated by sodium sulfate &gt; ammonium sulfate and is sensitive to inactivation by 5'AMP. Functionally, reduces sulfate for Cys biosynthesis. Substrate preference is adenosine-5'-phosphosulfate (APS) &gt;&gt; 3'-phosphoadenosine-5'-phosphosulfate (PAPS). Uses glutathione or DTT as source of protons. This is 5'-adenylylsulfate reductase 1, chloroplastic (APR1) from Arabidopsis thaliana (Mouse-ear cress).